A 416-amino-acid chain; its full sequence is Squalene synthase (416 aa).

Transmembrane regions (helical) follow at residues 285-304 (VINFCAIPQVMAIGTLNACY) and 386-406 (FISYDWMAVTSLAVSSAFLIA).

It belongs to the phytoene/squalene synthase family. Mg(2+) is required as a cofactor.

It is found in the endoplasmic reticulum membrane. It catalyses the reaction 2 (2E,6E)-farnesyl diphosphate + NADPH + H(+) = squalene + 2 diphosphate + NADP(+). The enzyme catalyses 2 (2E,6E)-farnesyl diphosphate + NADH + H(+) = squalene + 2 diphosphate + NAD(+). The protein operates within terpene metabolism; lanosterol biosynthesis; lanosterol from farnesyl diphosphate: step 1/3. The polypeptide is Squalene synthase (fdfT) (Dictyostelium discoideum (Social amoeba)).